Reading from the N-terminus, the 649-residue chain is Acetyl-coenzyme A synthetase (649 aa).

Residues 190 to 193 and Thr-310 contribute to the CoA site; that span reads RGGR. Residues 386-388, 410-415, Asp-499, and Arg-514 each bind ATP; these read GEP and DTWWQT. Ser-522 provides a ligand contact to CoA. ATP is bound at residue Arg-525. Positions 536, 538, and 541 each coordinate Mg(2+). Arg-583 contributes to the CoA binding site. N6-acetyllysine is present on Lys-608.

This sequence belongs to the ATP-dependent AMP-binding enzyme family. Requires Mg(2+) as cofactor. In terms of processing, acetylated. Deacetylation by the SIR2-homolog deacetylase activates the enzyme.

The catalysed reaction is acetate + ATP + CoA = acetyl-CoA + AMP + diphosphate. Functionally, catalyzes the conversion of acetate into acetyl-CoA (AcCoA), an essential intermediate at the junction of anabolic and catabolic pathways. AcsA undergoes a two-step reaction. In the first half reaction, AcsA combines acetate with ATP to form acetyl-adenylate (AcAMP) intermediate. In the second half reaction, it can then transfer the acetyl group from AcAMP to the sulfhydryl group of CoA, forming the product AcCoA. In Methylorubrum populi (strain ATCC BAA-705 / NCIMB 13946 / BJ001) (Methylobacterium populi), this protein is Acetyl-coenzyme A synthetase.